Here is a 78-residue protein sequence, read N- to C-terminus: Mandibular organ-inhibiting hormone 1 (78 aa).

Intrachain disulfides connect cysteine 7–cysteine 44, cysteine 24–cysteine 40, and cysteine 27–cysteine 53.

It belongs to the arthropod CHH/MIH/GIH/VIH hormone family. Produced by the medulla terminalis X-organ in the eyestalks and transported to the sinus gland where it is stored and released.

Its subcellular location is the secreted. Functionally, represses the synthesis of methyl farnesoate, the precursor of insect juvenile hormone III in the mandibular organ. The sequence is that of Mandibular organ-inhibiting hormone 1 from Cancer pagurus (Rock crab).